Reading from the N-terminus, the 660-residue chain is ATP-dependent zinc metalloprotease FtsH (660 aa).

Residues 1-20 (MMPSSQRPSPRGSRQSPSPD) form a disordered region. Residues 1-24 (MMPSSQRPSPRGSRQSPSPDQRGR) are Cytoplasmic-facing. The chain crosses the membrane as a helical span at residues 25 to 45 (IAFAILATLVVAVLLLTLFSH). Residues 46-118 (APSGQPLGYS…VQVSYITPGP (73 aa)) are Extracellular-facing. The chain crosses the membrane as a helical span at residues 119-139 (GIASTIIEYVIFFGIFIGIWV). Residues 140–660 (YLTRRTQGSV…ASHDDTDPVS (521 aa)) lie on the Cytoplasmic side of the membrane. 213–220 (GPPGTGKT) is an ATP binding site. Zn(2+) is bound at residue His-435. Residue Glu-436 is part of the active site. Positions 439 and 511 each coordinate Zn(2+).

In the central section; belongs to the AAA ATPase family. The protein in the C-terminal section; belongs to the peptidase M41 family. In terms of assembly, homohexamer. Zn(2+) serves as cofactor.

The protein resides in the cell membrane. Functionally, acts as a processive, ATP-dependent zinc metallopeptidase for both cytoplasmic and membrane proteins. Plays a role in the quality control of integral membrane proteins. The chain is ATP-dependent zinc metalloprotease FtsH from Acidimicrobium ferrooxidans (strain DSM 10331 / JCM 15462 / NBRC 103882 / ICP).